Here is a 555-residue protein sequence, read N- to C-terminus: Phosphomethylpyrimidine synthase (555 aa).

Substrate-binding positions include Asn-191, Met-220, Tyr-249, His-285, 305-307 (SRG), 346-349 (DGLR), and Glu-385. His-389 provides a ligand contact to Zn(2+). Tyr-412 lines the substrate pocket. His-453 contributes to the Zn(2+) binding site. [4Fe-4S] cluster-binding residues include Cys-533, Cys-536, and Cys-541.

It belongs to the ThiC family. As to quaternary structure, homodimer. [4Fe-4S] cluster serves as cofactor.

The enzyme catalyses 5-amino-1-(5-phospho-beta-D-ribosyl)imidazole + S-adenosyl-L-methionine = 4-amino-2-methyl-5-(phosphooxymethyl)pyrimidine + CO + 5'-deoxyadenosine + formate + L-methionine + 3 H(+). It participates in cofactor biosynthesis; thiamine diphosphate biosynthesis. In terms of biological role, catalyzes the synthesis of the hydroxymethylpyrimidine phosphate (HMP-P) moiety of thiamine from aminoimidazole ribotide (AIR) in a radical S-adenosyl-L-methionine (SAM)-dependent reaction. In Ehrlichia ruminantium (strain Welgevonden), this protein is Phosphomethylpyrimidine synthase.